The primary structure comprises 195 residues: Thymidine kinase (195 aa).

ATP contacts are provided by residues 15 to 22 (GSMFSGKS) and 88 to 91 (DEVQ). Catalysis depends on glutamate 89, which acts as the Proton acceptor. 4 residues coordinate Zn(2+): cysteine 145, cysteine 148, cysteine 183, and cysteine 186.

This sequence belongs to the thymidine kinase family. Homotetramer.

Its subcellular location is the cytoplasm. It catalyses the reaction thymidine + ATP = dTMP + ADP + H(+). This chain is Thymidine kinase, found in Bacillus cereus (strain ZK / E33L).